A 76-amino-acid polypeptide reads, in one-letter code: Contulakin-G (76 aa).

The N-terminal stretch at 1 to 22 (MQTAYWVMVMMMVWIAAPLSEG) is a signal peptide. The propeptide occupies 23–50 (GKLNDVIRGLVPDDITPQLILGSLISRR). Gln51 carries the post-translational modification Pyrrolidone carboxylic acid. The segment at 51-76 (QSEEGGSNATKKPYILRASDQVASGP) is disordered. O-linked (GalNAc...) threonine glycosylation is present at Thr60. Residues 67–76 (RASDQVASGP) constitute a propeptide that is removed on maturation.

It belongs to the conotoxin C superfamily. In terms of processing, O-glycosylated. The glycosylation seems to enhance the affinity to the neurotensin receptors. Expressed by the venom duct.

The protein resides in the secreted. Functionally, acts as an agonist of neurotensin receptors. It binds to human neurotensin type 1 receptor (NTSR1), rat neurotensin types 1 and 2 receptors (NTSR1/NTSR2) and mouse neurotensin type 3 receptor (SORT1). In Conus geographus (Geography cone), this protein is Contulakin-G.